The chain runs to 227 residues: Ribosomal RNA large subunit methyltransferase E (227 aa).

S-adenosyl-L-methionine is bound by residues glycine 78, tryptophan 80, aspartate 103, aspartate 119, and aspartate 143. Lysine 183 acts as the Proton acceptor in catalysis.

It belongs to the class I-like SAM-binding methyltransferase superfamily. RNA methyltransferase RlmE family.

The protein resides in the cytoplasm. It carries out the reaction uridine(2552) in 23S rRNA + S-adenosyl-L-methionine = 2'-O-methyluridine(2552) in 23S rRNA + S-adenosyl-L-homocysteine + H(+). Functionally, specifically methylates the uridine in position 2552 of 23S rRNA at the 2'-O position of the ribose in the fully assembled 50S ribosomal subunit. The polypeptide is Ribosomal RNA large subunit methyltransferase E (Rickettsia akari (strain Hartford)).